Reading from the N-terminus, the 232-residue chain is Phosphoglycolate phosphatase (232 aa).

Aspartate 13 acts as the Nucleophile in catalysis. Residues aspartate 13, aspartate 15, and aspartate 175 each coordinate Mg(2+).

This sequence belongs to the HAD-like hydrolase superfamily. CbbY/CbbZ/Gph/YieH family. In terms of assembly, monomer. Requires Mg(2+) as cofactor. It depends on chloride as a cofactor.

It catalyses the reaction 2-phosphoglycolate + H2O = glycolate + phosphate. It functions in the pathway organic acid metabolism; glycolate biosynthesis; glycolate from 2-phosphoglycolate: step 1/1. In terms of biological role, specifically catalyzes the dephosphorylation of 2-phosphoglycolate. Is involved in the dissimilation of the intracellular 2-phosphoglycolate formed during the DNA repair of 3'-phosphoglycolate ends, a major class of DNA lesions induced by oxidative stress. The polypeptide is Phosphoglycolate phosphatase (Yersinia pestis).